Consider the following 1516-residue polypeptide: AP-4 complex accessory subunit RUSC2 (1516 aa).

Disordered stretches follow at residues 33–105, 202–224, 229–248, 331–351, 404–445, and 478–511; these read AGGG…PFLL, LDEC…SGFS, WKLS…SGDQ, SKMS…GYGC, LSSQ…PSEY, and GQVY…PVRL. Polar residues predominate over residues 66-81; the sequence is LFSSLHSTPGGTARSI. Residues 82–92 are compositionally biased toward basic and acidic residues; it reads DSTKSRSRDGR. A compositionally biased stretch (gly residues) spans 206 to 217; sequence GGPGGSGSGGGA. Basic and acidic residues predominate over residues 333–344; the sequence is MSYESHHPESGG. The segment covering 405-420 has biased composition (low complexity); that stretch reads SSQSSPSPAGSSITSC. Residues 428-440 show a composition bias toward pro residues; sequence SPPPGPGPDPGPS. The span at 480–493 shows a compositional bias: polar residues; that stretch reads VYTNTSPPNLSTGR. A phosphoserine mark is found at Ser536, Ser543, and Ser559. Disordered regions lie at residues 550–588, 646–688, 727–836, and 868–889; these read GRKK…APLD, LMDP…KEQR, RTQQ…PQKE, and ESLA…ANHL. The segment covering 567–579 has biased composition (polar residues); that stretch reads GDSSQEFSPIQEA. Phosphoserine is present on Ser656. Residues 729-746 are compositionally biased toward low complexity; it reads QQPAPLAAPAAQVSVPAP. The residue at position 781 (Ser781) is a Phosphoserine. Over residues 791 to 801 the composition is skewed to low complexity; that stretch reads PSTDSSASTSC. In terms of domain architecture, RUN spans 1031-1175; it reads NVGHLVLKYL…LPFSLDLLFQ (145 aa). Disordered stretches follow at residues 1210–1261, 1286–1408, and 1422–1449; these read RARG…GRAR, IEGS…LPSD, and QTVG…SSPP. The segment covering 1219 to 1230 has biased composition (basic and acidic residues); it reads DVDRAAQGERVK. A compositionally biased stretch (acidic residues) spans 1237–1251; sequence GGEEEEEEEETEEVA. The span at 1355–1364 shows a compositional bias: basic and acidic residues; the sequence is ELRRSREREG. 2 positions are modified to phosphoserine: Ser1368 and Ser1380. Positions 1426-1437 are enriched in basic and acidic residues; sequence SRREPEPKESLQ. In terms of domain architecture, SH3 spans 1447-1506; it reads SPPCEVQALCHHLATGPGQLSFHKGDILRVLGRAGGDWLRCSRGPDSGLVPLAYVTLTPT.

Associated component of the adapter-like complex 4 (AP-4). Interacts with active RAB1A and RAB1B, and with GOLGA2. Interacts (via RUN domain) with RAB35 (GTP-bound form); the interaction recruits RUSC2 to the plasma membrane. In terms of tissue distribution, widely expressed, with highest levels in brain and testis.

It is found in the cytoplasm. It localises to the cytosol. The protein localises to the cell membrane. Functionally, associates with the adapter-like complex 4 (AP-4) and may therefore play a role in vesicular trafficking of proteins at the trans-Golgi network. This chain is AP-4 complex accessory subunit RUSC2, found in Homo sapiens (Human).